The primary structure comprises 136 residues: MGWSCIIFFLVATATGVHSQVQLQQSGPEVVRPGVSVKISCKGSGYTFTDYAMHWVKQSHAKSLEWIGVISTYNGNTSYNQKFKGKATMTVDKSSSTVHMELARLTSEDSANLYCARYYGNYFDYWGQGTTLTVSS.

The N-terminal stretch at 1–19 (MGWSCIIFFLVATATGVHS) is a signal peptide. The region spanning 20 to 135 (QVQLQQSGPE…WGQGTTLTVS (116 aa)) is the Ig-like domain.

This Mus musculus (Mouse) protein is Ig heavy chain V region BCL1.